The chain runs to 77 residues: Cysteine-rich protein 1 (77 aa).

The 62-residue stretch at 2–63 folds into the LIM zinc-binding domain; it reads PKCPKCNKEV…HPCYAAMFGP (62 aa). N6-acetyllysine is present on residues K9 and K22. An Omega-N-methylarginine modification is found at R68.

Functionally, seems to have a role in zinc absorption and may function as an intracellular zinc transport protein. The chain is Cysteine-rich protein 1 (CRIP1) from Homo sapiens (Human).